Here is a 114-residue protein sequence, read N- to C-terminus: Hydrogenase maturation factor HypA (114 aa).

Residue H2 participates in Ni(2+) binding. Zn(2+) contacts are provided by C73, C76, C90, and C93.

Belongs to the HypA/HybF family.

Functionally, involved in the maturation of [NiFe] hydrogenases. Required for nickel insertion into the metal center of the hydrogenase. This Chloroflexus aggregans (strain MD-66 / DSM 9485) protein is Hydrogenase maturation factor HypA.